The following is a 794-amino-acid chain: Protein smoothened (794 aa).

A signal peptide spans 1-15 (GPCWLWALALGLALG). The Extracellular portion of the chain corresponds to 16–201 (PRRCPAAPLN…FTETEHREMH (186 aa)). Asn25 is a glycosylation site (N-linked (GlcNAc...) asparagine). 5 disulfides stabilise this stretch: Cys34–Cys148, Cys40–Cys104, Cys48–Cys97, Cys88–Cys124, and Cys117–Cys139. An FZ domain is found at 35-151 (RRPAACERLR…DRFPEGCPNE (117 aa)). Asp65 contacts cholesterol. An N-linked (GlcNAc...) asparagine glycan is attached at Asn158. Cystine bridges form between Cys163-Cys183 and Cys187-Cys264. A helical membrane pass occupies residues 202 to 222 (VYIAFSSVTISCTFFTLATFV). Topologically, residues 223–231 (ADWRNSNRY) are cytoplasmic. Residues 232-252 (PAVILFYVNACFFVGSIGCVA) traverse the membrane as a helical segment. Topologically, residues 253 to 283 (QFMDGARDEIVCRADGTMRLGEPTSNETLSC) are extracellular. Asn278 carries N-linked (GlcNAc...) asparagine glycosylation. A disulfide bridge links Cys283 with Cys359. Residues 284–304 (VIIFVIVYYSLMSGVIWFVML) traverse the membrane as a helical segment. The Cytoplasmic segment spans residues 305 to 327 (TYAWHTSFKALGTTYQPLLGKTS). A helical membrane pass occupies residues 328 to 348 (YFHLITWSIPFVLTVAILAVA). Over 349–371 (QVDGDSVSGICFVGYKNYRYRAG) the chain is Extracellular. Tyr363 contributes to the cholesterol binding site. The helical transmembrane segment at 372 to 392 (FVLAPIGLVLIVGGYFLIRGV) threads the bilayer. Over 393–420 (MTLFSIKSNHPGLLSEKAASKINETMLR) the chain is Cytoplasmic. The helical transmembrane segment at 421–440 (LGIFGFLAFGFVFITFGCHF) threads the bilayer. The Extracellular segment spans residues 441 to 493 (YDFFNQAEWERSFREYVLCEANVTIATQTNKPIPECEIKNRPSLLVEKINLFA). The cysteines at positions 459 and 476 are disulfide-linked. A glycan (N-linked (GlcNAc...) asparagine) is linked at Asn462. The chain crosses the membrane as a helical span at residues 494 to 514 (MFGTGISMSTWVWTKATLLIW). Over 515 to 794 (KRTWCRLTGQ…AELLDADLDF (280 aa)) the chain is Cytoplasmic. Disordered stretches follow at residues 634-655 (LQKRSRKKKRRKKKKEEVCPER) and 723-773 (PFCP…RAGL). Residues 637–647 (RSRKKKRRKKK) are compositionally biased toward basic residues.

The protein belongs to the G-protein coupled receptor Fz/Smo family. Homodimer.

Its subcellular location is the cell membrane. It is found in the cell projection. The protein localises to the cilium. G protein-coupled receptor which associates with the patched protein (PTCH) to transduce hedgehog protein signaling. Binding of sonic hedgehog (SHH) to its receptor patched prevents inhibition of smoothened (SMO) by patched. When active, SMO binds to and sequesters protein kinase A catalytic subunit PRKACA at the cell membrane, preventing PRKACA-mediated phosphorylation of GLI transcription factors which releases the GLI proteins from PRKACA-mediated inhibition and allows for transcriptional activation of hedgehog pathway target genes. This chain is Protein smoothened (SMO), found in Gallus gallus (Chicken).